Consider the following 917-residue polypeptide: MTVGRRLNDEEAIPLTAKEAGSRDSIDSSSTASVSLTLVDGTNHTTAKPSKSAHKGVSRDRYADEKYRDDVEEDWEEDRYIPSNAKPSQRRTQIVFWLLVALCVGGWAVAFLFFVTSPGNTISTTPDTGSGSPDSDVIKPGSPPAGKKIPLDDVLGGAWSPTQHTISWIAGPKGEDGLLLQKSEGGTGPYLHVEDVRNIHGTQSNNKSMVLMKDSVFFVNDERISPEKVWPSPDLKTVLAMTRQKKNWRHSYTGLYWLFDVETQTAQPLDPGAPNGRIQLATWSPTSDAVAFTRDNNLYIRNLTSKTVKAITTDGGANLFYGIPDWVYEEEVFEGNSATWWSLDGKYISFLRTNETTVPEFPVDFYLSSPPDYAPKPGEEAYPYVQQIKYPKAGAPNPTVGLQFYDVEREESFSVDVKDSLNDDDRIIIEVIPGSNGRILVRETNRESYIVKVAAIDATKREGKIIRSDNIDEIDGGWVEPSHTTTYIPSDPASGRPNDGYIDTVIHEGYNHLAYFTPLENPKPKMLTTGKWEVVAAPSGVDLKNNVIYFVATKESPIDRHVYSVKLDGSELQLLKDSEKSAYYDVSFSHGAGYMLLQYQGPKIPWQKLMNSPSNTDSYTEILEENKRLAKLSNEFALPSLHYSSITVDGFKLPVVERRPPNFDETKKYPVLFHLYGGPGSQTVNKKFLVNFQTYVASTLGYIVVTVDGRGTGFNGRKFRCIVRRNLGHYEAYDQIQTAKAWGRKPYVDKTRIAIWGWSYGGFMTLKTLEQDAGETFQYGMAVAPVTDWRYYDSIYTERYMHMPQNNEEGYETASVSNSTALSQNTRFLIMHGSADDNVHFQNTLTLLDKLDIMGVHNYDMHVFPDSNHGIYFHHAYKMVHQRLSDWLVNAFNGEWVRLRDPKPTIIKRVIRRLLHR.

Residues 1-75 (MTVGRRLNDE…KYRDDVEEDW (75 aa)) are disordered. Residues 1-93 (MTVGRRLNDE…NAKPSQRRTQ (93 aa)) are Cytoplasmic-facing. Over residues 27 to 39 (DSSSTASVSLTLV) the composition is skewed to low complexity. A compositionally biased stretch (polar residues) spans 40–49 (DGTNHTTAKP). Residues 57–69 (VSRDRYADEKYRD) are compositionally biased toward basic and acidic residues. The chain crosses the membrane as a helical; Signal-anchor for type II membrane protein span at residues 94 to 114 (IVFWLLVALCVGGWAVAFLFF). The Vacuolar segment spans residues 115–917 (VTSPGNTIST…KRVIRRLLHR (803 aa)). Residues 124-133 (TTPDTGSGSP) are compositionally biased toward polar residues. The interval 124–150 (TTPDTGSGSPDSDVIKPGSPPAGKKIP) is disordered. N-linked (GlcNAc...) asparagine glycans are attached at residues Asn-206, Asn-302, and Asn-354. Ser-759 (charge relay system) is an active-site residue. Asn-818 carries an N-linked (GlcNAc...) asparagine glycan. Active-site charge relay system residues include Asp-836 and His-869.

This sequence belongs to the peptidase S9B family.

It is found in the vacuole membrane. It catalyses the reaction Release of an N-terminal dipeptide, Xaa-Yaa-|-Zaa-, from a polypeptide, preferentially when Yaa is Pro, provided Zaa is neither Pro nor hydroxyproline.. Type IV dipeptidyl-peptidase which removes N-terminal dipeptides sequentially from polypeptides having unsubstituted N-termini provided that the penultimate residue is proline. The polypeptide is Probable dipeptidyl-aminopeptidase B (DAPB) (Arthroderma gypseum (strain ATCC MYA-4604 / CBS 118893) (Microsporum gypseum)).